Consider the following 171-residue polypeptide: Odorant-binding protein 1b (171 aa).

The N-terminal stretch at 1–19 is a signal peptide; sequence MMVKFLLLALVFGLAHVHA. 2 cysteine pairs are disulfide-bonded: cysteine 57-cysteine 61 and cysteine 76-cysteine 169.

This sequence belongs to the calycin superfamily. Lipocalin family. May form a heterodimer with OBP1A. The N-terminus may be blocked. Expressed in nasal mucosa (at protein level). Specifically detected in septal and lateral nasal glands.

Its subcellular location is the secreted. Binds the chemical odorant 2-isobutyl-3-methoxypyrazine. The sequence is that of Odorant-binding protein 1b from Mus musculus (Mouse).